The chain runs to 205 residues: MAHTLYDRTIAFASICQAVKLVQLVAQNGNCDREILEACLNSITVTNPSNTIEIYGNESNLRLGLETLSQEIDSSPTGSEITRYLVSVMALERKLSGRRDSMGQLGDRIDVIIRQKDHFDLLDDQMVSNLASIYLDIISPLGPRIQVTGAPAHLQQQQVQHKVRALLLAAVRGAVLWRQVGGKRRHLIFGRKQMVEQAKILLARC.

It belongs to the HflD family.

Its subcellular location is the cytoplasm. It is found in the cell inner membrane. This Photobacterium profundum (strain SS9) protein is High frequency lysogenization protein HflD homolog.